A 699-amino-acid chain; its full sequence is Elongation factor G (699 aa).

The tr-type G domain occupies 8–283; it reads EHIRNIGICA…AVVDFLPSPI (276 aa). GTP is bound by residues 17–24, 81–85, and 135–138; these read AHIDAGKT, DTPGH, and NKMD.

Belongs to the TRAFAC class translation factor GTPase superfamily. Classic translation factor GTPase family. EF-G/EF-2 subfamily.

Its subcellular location is the cytoplasm. Functionally, catalyzes the GTP-dependent ribosomal translocation step during translation elongation. During this step, the ribosome changes from the pre-translocational (PRE) to the post-translocational (POST) state as the newly formed A-site-bound peptidyl-tRNA and P-site-bound deacylated tRNA move to the P and E sites, respectively. Catalyzes the coordinated movement of the two tRNA molecules, the mRNA and conformational changes in the ribosome. This Rickettsia felis (strain ATCC VR-1525 / URRWXCal2) (Rickettsia azadi) protein is Elongation factor G.